The primary structure comprises 244 residues: Serine acetyltransferase (244 aa).

It belongs to the transferase hexapeptide repeat family.

The protein resides in the cytoplasm. It catalyses the reaction L-serine + acetyl-CoA = O-acetyl-L-serine + CoA. It functions in the pathway amino-acid biosynthesis; L-cysteine biosynthesis; L-cysteine from L-serine: step 1/2. In Synechococcus elongatus (strain ATCC 33912 / PCC 7942 / FACHB-805) (Anacystis nidulans R2), this protein is Serine acetyltransferase (cysE).